A 160-amino-acid polypeptide reads, in one-letter code: Putative 4-hydroxy-4-methyl-2-oxoglutarate aldolase (160 aa).

Substrate-binding positions include 75-78 (GDLI) and arginine 97. An a divalent metal cation-binding site is contributed by aspartate 98.

It belongs to the class II aldolase/RraA-like family. As to quaternary structure, homotrimer. Requires a divalent metal cation as cofactor.

The catalysed reaction is 4-hydroxy-4-methyl-2-oxoglutarate = 2 pyruvate. The enzyme catalyses oxaloacetate + H(+) = pyruvate + CO2. Catalyzes the aldol cleavage of 4-hydroxy-4-methyl-2-oxoglutarate (HMG) into 2 molecules of pyruvate. Also contains a secondary oxaloacetate (OAA) decarboxylase activity due to the common pyruvate enolate transition state formed following C-C bond cleavage in the retro-aldol and decarboxylation reactions. The protein is Putative 4-hydroxy-4-methyl-2-oxoglutarate aldolase of Rhodospirillum centenum (strain ATCC 51521 / SW).